A 110-amino-acid polypeptide reads, in one-letter code: Membrane-associated protein slr1513 (110 aa).

It localises to the cellular thylakoid membrane. It is found in the cell membrane. The chain is Membrane-associated protein slr1513 from Synechocystis sp. (strain ATCC 27184 / PCC 6803 / Kazusa).